Reading from the N-terminus, the 343-residue chain is S-adenosylmethionine:tRNA ribosyltransferase-isomerase (343 aa).

Belongs to the QueA family. In terms of assembly, monomer.

It is found in the cytoplasm. The enzyme catalyses 7-aminomethyl-7-carbaguanosine(34) in tRNA + S-adenosyl-L-methionine = epoxyqueuosine(34) in tRNA + adenine + L-methionine + 2 H(+). Its pathway is tRNA modification; tRNA-queuosine biosynthesis. Its function is as follows. Transfers and isomerizes the ribose moiety from AdoMet to the 7-aminomethyl group of 7-deazaguanine (preQ1-tRNA) to give epoxyqueuosine (oQ-tRNA). The sequence is that of S-adenosylmethionine:tRNA ribosyltransferase-isomerase from Pelobacter propionicus (strain DSM 2379 / NBRC 103807 / OttBd1).